The following is a 249-amino-acid chain: Enolase-phosphatase E1 (249 aa).

This sequence belongs to the HAD-like hydrolase superfamily. MasA/MtnC family. As to quaternary structure, monomer. Mg(2+) serves as cofactor.

The enzyme catalyses 5-methylsulfanyl-2,3-dioxopentyl phosphate + H2O = 1,2-dihydroxy-5-(methylsulfanyl)pent-1-en-3-one + phosphate. The protein operates within amino-acid biosynthesis; L-methionine biosynthesis via salvage pathway; L-methionine from S-methyl-5-thio-alpha-D-ribose 1-phosphate: step 3/6. Its pathway is amino-acid biosynthesis; L-methionine biosynthesis via salvage pathway; L-methionine from S-methyl-5-thio-alpha-D-ribose 1-phosphate: step 4/6. Its function is as follows. Bifunctional enzyme that catalyzes the enolization of 2,3-diketo-5-methylthiopentyl-1-phosphate (DK-MTP-1-P) into the intermediate 2-hydroxy-3-keto-5-methylthiopentenyl-1-phosphate (HK-MTPenyl-1-P), which is then dephosphorylated to form the acireductone 1,2-dihydroxy-3-keto-5-methylthiopentene (DHK-MTPene). The sequence is that of Enolase-phosphatase E1 from Synechococcus sp. (strain RCC307).